The following is an 88-amino-acid chain: Cytochrome c oxidase subunit 6B2 (88 aa).

Residues 29–75 (TRNCYQNFLDYHRCIKTMNRRGKSTQPCEYYFRVYHSLCPISWVQRW) enclose the CHCH domain. A Cx9C motif motif is present at residues 32 to 42 (CYQNFLDYHRC). Disulfide bonds link Cys32-Cys67 and Cys42-Cys56. The Cx10C motif signature appears at 56 to 67 (CEYYFRVYHSLC).

This sequence belongs to the cytochrome c oxidase subunit 6B family. Component of the cytochrome c oxidase (complex IV, CIV), a multisubunit enzyme composed of 14 subunits. The complex is composed of a catalytic core of 3 subunits MT-CO1, MT-CO2 and MT-CO3, encoded in the mitochondrial DNA, and 11 supernumerary subunits COX4I1 (or COX4I2), COX5A, COX5B, COX6A2 (or COX6A1), COX6B1 (or COX6B2), COX6C, COX7A1 (or COX7A2), COX7B, COX7C, COX8B and NDUFA4, which are encoded in the nuclear genome. The complex exists as a monomer or a dimer and forms supercomplexes (SCs) in the inner mitochondrial membrane with NADH-ubiquinone oxidoreductase (complex I, CI) and ubiquinol-cytochrome c oxidoreductase (cytochrome b-c1 complex, complex III, CIII), resulting in different assemblies (supercomplex SCI(1)III(2)IV(1) and megacomplex MCI(2)III(2)IV(2)). As to expression, testis specific.

It is found in the mitochondrion inner membrane. The protein operates within energy metabolism; oxidative phosphorylation. Component of the cytochrome c oxidase, the last enzyme in the mitochondrial electron transport chain which drives oxidative phosphorylation. The respiratory chain contains 3 multisubunit complexes succinate dehydrogenase (complex II, CII), ubiquinol-cytochrome c oxidoreductase (cytochrome b-c1 complex, complex III, CIII) and cytochrome c oxidase (complex IV, CIV), that cooperate to transfer electrons derived from NADH and succinate to molecular oxygen, creating an electrochemical gradient over the inner membrane that drives transmembrane transport and the ATP synthase. Cytochrome c oxidase is the component of the respiratory chain that catalyzes the reduction of oxygen to water. Electrons originating from reduced cytochrome c in the intermembrane space (IMS) are transferred via the dinuclear copper A center (CU(A)) of subunit 2 and heme A of subunit 1 to the active site in subunit 1, a binuclear center (BNC) formed by heme A3 and copper B (CU(B)). The BNC reduces molecular oxygen to 2 water molecules using 4 electrons from cytochrome c in the IMS and 4 protons from the mitochondrial matrix. This Bos taurus (Bovine) protein is Cytochrome c oxidase subunit 6B2 (COX6B2).